Consider the following 343-residue polypeptide: Holliday junction branch migration complex subunit RuvB (343 aa).

A large ATPase domain (RuvB-L) region spans residues 1-181 (MDRIIDSAAT…FGIVQRLEFY (181 aa)). Residues isoleucine 20, arginine 21, glycine 62, lysine 65, threonine 66, threonine 67, 128–130 (EDF), arginine 171, tyrosine 181, and arginine 218 contribute to the ATP site. Residue threonine 66 participates in Mg(2+) binding. Positions 182–252 (SPEDLARIVR…VAQAAMQMLK (71 aa)) are small ATPAse domain (RuvB-S). The segment at 255–343 (QGGFDELDRR…SAFTDPEDLF (89 aa)) is head domain (RuvB-H). DNA-binding residues include arginine 291, arginine 310, and arginine 315.

The protein belongs to the RuvB family. In terms of assembly, homohexamer. Forms an RuvA(8)-RuvB(12)-Holliday junction (HJ) complex. HJ DNA is sandwiched between 2 RuvA tetramers; dsDNA enters through RuvA and exits via RuvB. An RuvB hexamer assembles on each DNA strand where it exits the tetramer. Each RuvB hexamer is contacted by two RuvA subunits (via domain III) on 2 adjacent RuvB subunits; this complex drives branch migration. In the full resolvosome a probable DNA-RuvA(4)-RuvB(12)-RuvC(2) complex forms which resolves the HJ.

Its subcellular location is the cytoplasm. The catalysed reaction is ATP + H2O = ADP + phosphate + H(+). Its function is as follows. The RuvA-RuvB-RuvC complex processes Holliday junction (HJ) DNA during genetic recombination and DNA repair, while the RuvA-RuvB complex plays an important role in the rescue of blocked DNA replication forks via replication fork reversal (RFR). RuvA specifically binds to HJ cruciform DNA, conferring on it an open structure. The RuvB hexamer acts as an ATP-dependent pump, pulling dsDNA into and through the RuvAB complex. RuvB forms 2 homohexamers on either side of HJ DNA bound by 1 or 2 RuvA tetramers; 4 subunits per hexamer contact DNA at a time. Coordinated motions by a converter formed by DNA-disengaged RuvB subunits stimulates ATP hydrolysis and nucleotide exchange. Immobilization of the converter enables RuvB to convert the ATP-contained energy into a lever motion, pulling 2 nucleotides of DNA out of the RuvA tetramer per ATP hydrolyzed, thus driving DNA branch migration. The RuvB motors rotate together with the DNA substrate, which together with the progressing nucleotide cycle form the mechanistic basis for DNA recombination by continuous HJ branch migration. Branch migration allows RuvC to scan DNA until it finds its consensus sequence, where it cleaves and resolves cruciform DNA. This chain is Holliday junction branch migration complex subunit RuvB, found in Xylella fastidiosa (strain Temecula1 / ATCC 700964).